A 181-amino-acid polypeptide reads, in one-letter code: 6,7-dimethyl-8-ribityllumazine synthase 2 (181 aa).

Positions 1 to 23 (MSLPMTETVTDPAETAPPTAERS) are disordered. Residues Trp-40, 74–76 (SFE), 98–100 (LVV), and Ser-129 contribute to the 5-amino-6-(D-ribitylamino)uracil site.

It belongs to the DMRL synthase family.

It catalyses the reaction (2S)-2-hydroxy-3-oxobutyl phosphate + 5-amino-6-(D-ribitylamino)uracil = 6,7-dimethyl-8-(1-D-ribityl)lumazine + phosphate + 2 H2O + H(+). It functions in the pathway cofactor biosynthesis; riboflavin biosynthesis; riboflavin from 2-hydroxy-3-oxobutyl phosphate and 5-amino-6-(D-ribitylamino)uracil: step 1/2. In terms of biological role, catalyzes the formation of 6,7-dimethyl-8-ribityllumazine by condensation of 5-amino-6-(D-ribitylamino)uracil with 3,4-dihydroxy-2-butanone 4-phosphate. This is the penultimate step in the biosynthesis of riboflavin. This chain is 6,7-dimethyl-8-ribityllumazine synthase 2, found in Rhodopseudomonas palustris (strain ATCC BAA-98 / CGA009).